The primary structure comprises 315 residues: KH domain-containing protein At5g56140 (315 aa).

Disordered regions lie at residues 1-53 and 136-158; these read MMMM…GGLR and SQFPSERSVPSSPGPNWLNSPGS. Gly residues predominate over residues 7-28; that stretch reads LGGGGGGGGGSGGGIGGGGGGR. Composition is skewed to polar residues over residues 31 to 53 and 136 to 146; these read TYSSSLSVPPSAPQSPNYSGGLR and SQFPSERSVPS. The KH domain occupies 171–238; that stretch reads DIPVDNYPNF…EHLNEPLHIL (68 aa). Residues 289-315 form a disordered region; it reads REEGSPMSGSVSPYNSLGMKRAKTREG. The residue at position 300 (serine 300) is a Phosphoserine.

The protein localises to the nucleus. The sequence is that of KH domain-containing protein At5g56140 from Arabidopsis thaliana (Mouse-ear cress).